Consider the following 448-residue polypeptide: Phosphoglucosamine mutase (448 aa).

S104 (phosphoserine intermediate) is an active-site residue. Residues S104, D243, D245, and D247 each coordinate Mg(2+). At S104 the chain carries Phosphoserine.

Belongs to the phosphohexose mutase family. Requires Mg(2+) as cofactor. In terms of processing, activated by phosphorylation.

It catalyses the reaction alpha-D-glucosamine 1-phosphate = D-glucosamine 6-phosphate. In terms of biological role, catalyzes the conversion of glucosamine-6-phosphate to glucosamine-1-phosphate. In Xylella fastidiosa (strain Temecula1 / ATCC 700964), this protein is Phosphoglucosamine mutase.